Consider the following 158-residue polypeptide: MKKVPIKVCVSNKQKDVPIRVQSAKKLVLCCLQYWKITTDQVYIYFLDDKALAQIHDEVFSDPSLTDTITLPIDSPGISSHPHVLGEAFISPKAAIRFLKDRSQDSDLLYEEISRYVVHSLLHMLGYDDQTPEERKKMRVKENQALCMLREKHALLSD.

Positions 119, 123, and 129 each coordinate Zn(2+).

This sequence belongs to the endoribonuclease YbeY family. Zn(2+) serves as cofactor.

Its subcellular location is the cytoplasm. Its function is as follows. Single strand-specific metallo-endoribonuclease involved in late-stage 70S ribosome quality control and in maturation of the 3' terminus of the 16S rRNA. In Chlamydia felis (strain Fe/C-56) (Chlamydophila felis), this protein is Endoribonuclease YbeY.